A 423-amino-acid polypeptide reads, in one-letter code: Glutamate-1-semialdehyde 2,1-aminomutase (423 aa).

Residue Lys258 is modified to N6-(pyridoxal phosphate)lysine.

The protein belongs to the class-III pyridoxal-phosphate-dependent aminotransferase family. HemL subfamily. Pyridoxal 5'-phosphate is required as a cofactor.

Its subcellular location is the cytoplasm. The enzyme catalyses (S)-4-amino-5-oxopentanoate = 5-aminolevulinate. It participates in porphyrin-containing compound metabolism; protoporphyrin-IX biosynthesis; 5-aminolevulinate from L-glutamyl-tRNA(Glu): step 2/2. In Pyrobaculum arsenaticum (strain DSM 13514 / JCM 11321 / PZ6), this protein is Glutamate-1-semialdehyde 2,1-aminomutase.